A 280-amino-acid chain; its full sequence is Bis(5'-nucleosyl)-tetraphosphatase, symmetrical (280 aa).

The protein belongs to the Ap4A hydrolase family.

It carries out the reaction P(1),P(4)-bis(5'-adenosyl) tetraphosphate + H2O = 2 ADP + 2 H(+). Its function is as follows. Hydrolyzes diadenosine 5',5'''-P1,P4-tetraphosphate to yield ADP. The chain is Bis(5'-nucleosyl)-tetraphosphatase, symmetrical from Shigella flexneri serotype 5b (strain 8401).